The chain runs to 130 residues: Small ribosomal subunit protein uS11c (130 aa).

The protein belongs to the universal ribosomal protein uS11 family. As to quaternary structure, part of the 30S ribosomal subunit.

The protein localises to the plastid. Its subcellular location is the chloroplast. This chain is Small ribosomal subunit protein uS11c, found in Angiopteris evecta (Mule's foot fern).